Here is a 61-residue protein sequence, read N- to C-terminus: Small ribosomal subunit protein bS21 (61 aa).

The tract at residues 34 to 61 (KREHYESPSVKRKKKSEAARKRKYKYNK) is disordered. Residues 43–61 (VKRKKKSEAARKRKYKYNK) show a composition bias toward basic residues.

This sequence belongs to the bacterial ribosomal protein bS21 family.

The protein is Small ribosomal subunit protein bS21 of Thermoanaerobacter pseudethanolicus (strain ATCC 33223 / 39E) (Clostridium thermohydrosulfuricum).